Reading from the N-terminus, the 241-residue chain is Carboxy-S-adenosyl-L-methionine synthase (241 aa).

Residues Tyr38, 63 to 65 (GCS), 88 to 89 (DN), 116 to 117 (DI), Asn131, and Arg198 contribute to the S-adenosyl-L-methionine site.

It belongs to the class I-like SAM-binding methyltransferase superfamily. Cx-SAM synthase family. In terms of assembly, homodimer.

The enzyme catalyses prephenate + S-adenosyl-L-methionine = carboxy-S-adenosyl-L-methionine + 3-phenylpyruvate + H2O. Catalyzes the conversion of S-adenosyl-L-methionine (SAM) to carboxy-S-adenosyl-L-methionine (Cx-SAM). This is Carboxy-S-adenosyl-L-methionine synthase from Histophilus somni (strain 129Pt) (Haemophilus somnus).